A 176-amino-acid chain; its full sequence is Disulfide bond formation protein B (176 aa).

Residues 1–14 (MLRFLNRCSRGRGA) lie on the Cytoplasmic side of the membrane. Residues 15–31 (WLLLAFTALALELTALY) form a helical membrane-spanning segment. Residues 32–49 (FQHVMLLKPCVLCIYQRS) lie on the Periplasmic side of the membrane. A disulfide bond links Cys41 and Cys44. The chain crosses the membrane as a helical span at residues 50–65 (ALWGVFAAGIVGAIAP). The Cytoplasmic segment spans residues 66 to 71 (SSLLRY). A helical transmembrane segment spans residues 72–89 (PAIALWIYSSYEGIRLAW). Residues 90 to 144 (KHTDILLNPSPFTTCDFFVSFPSWLPLDKWLPAIFNATGDCSERQWSFLSMEMPQ) are Periplasmic-facing. The cysteines at positions 104 and 130 are disulfide-linked. Residues 145–163 (WLLGIFAAYLLIAVLVLIA) form a helical membrane-spanning segment. At 164–176 (QPFRSKRRDLFSR) the chain is on the cytoplasmic side.

Belongs to the DsbB family.

The protein resides in the cell inner membrane. Functionally, required for disulfide bond formation in some periplasmic proteins. Acts by oxidizing the DsbA protein. The polypeptide is Disulfide bond formation protein B (Pectobacterium atrosepticum (strain SCRI 1043 / ATCC BAA-672) (Erwinia carotovora subsp. atroseptica)).